Here is a 357-residue protein sequence, read N- to C-terminus: Dihydroorotate dehydrogenase (quinone) (357 aa).

FMN-binding positions include 66 to 70 (AGFDK) and threonine 90. Lysine 70 provides a ligand contact to substrate. Position 115–119 (115–119 (NRMGF)) interacts with substrate. Residues asparagine 143 and asparagine 176 each coordinate FMN. A substrate-binding site is contributed by asparagine 176. Serine 179 acts as the Nucleophile in catalysis. A substrate-binding site is contributed by asparagine 181. Positions 212 and 240 each coordinate FMN. Substrate is bound at residue 241-242 (NT). FMN-binding positions include glycine 264, glycine 293, and 314-315 (YT).

It belongs to the dihydroorotate dehydrogenase family. Type 2 subfamily. Monomer. The cofactor is FMN.

The protein localises to the cell membrane. The catalysed reaction is (S)-dihydroorotate + a quinone = orotate + a quinol. The protein operates within pyrimidine metabolism; UMP biosynthesis via de novo pathway; orotate from (S)-dihydroorotate (quinone route): step 1/1. Its function is as follows. Catalyzes the conversion of dihydroorotate to orotate with quinone as electron acceptor. The sequence is that of Dihydroorotate dehydrogenase (quinone) from Mycobacterium tuberculosis (strain ATCC 25177 / H37Ra).